The primary structure comprises 294 residues: Flavin-dependent thymidylate synthase (294 aa).

The region spanning 27 to 250 (GFIRVIDYMG…PFTYEAFEEY (224 aa)) is the ThyX domain. Residues T73, 96–98 (RHR), and E104 each bind FAD. DUMP contacts are provided by residues 93–96 (QWIR), 104–108 (EYSAR), and R189. The short motif at 96–106 (RHRTASVNEYS) is the ThyX motif element. FAD-binding positions include 205–207 (NLH) and H211. Position 216 (R216) interacts with dUMP. R216 serves as the catalytic Involved in ionization of N3 of dUMP, leading to its activation.

This sequence belongs to the thymidylate synthase ThyX family. Homotetramer. FAD serves as cofactor.

It carries out the reaction dUMP + (6R)-5,10-methylene-5,6,7,8-tetrahydrofolate + NADPH + H(+) = dTMP + (6S)-5,6,7,8-tetrahydrofolate + NADP(+). Its pathway is pyrimidine metabolism; dTTP biosynthesis. Functionally, catalyzes the reductive methylation of 2'-deoxyuridine-5'-monophosphate (dUMP) to 2'-deoxythymidine-5'-monophosphate (dTMP) while utilizing 5,10-methylenetetrahydrofolate (mTHF) as the methyl donor, and NADPH and FADH(2) as the reductant. This is Flavin-dependent thymidylate synthase from Rickettsia typhi (strain ATCC VR-144 / Wilmington).